We begin with the raw amino-acid sequence, 289 residues long: Bifunctional protein FolD 2 (289 aa).

NADP(+) is bound by residues 162–164 (GRS), serine 187, and isoleucine 228.

It belongs to the tetrahydrofolate dehydrogenase/cyclohydrolase family. In terms of assembly, homodimer.

It catalyses the reaction (6R)-5,10-methylene-5,6,7,8-tetrahydrofolate + NADP(+) = (6R)-5,10-methenyltetrahydrofolate + NADPH. It carries out the reaction (6R)-5,10-methenyltetrahydrofolate + H2O = (6R)-10-formyltetrahydrofolate + H(+). It participates in one-carbon metabolism; tetrahydrofolate interconversion. In terms of biological role, catalyzes the oxidation of 5,10-methylenetetrahydrofolate to 5,10-methenyltetrahydrofolate and then the hydrolysis of 5,10-methenyltetrahydrofolate to 10-formyltetrahydrofolate. This Deinococcus geothermalis (strain DSM 11300 / CIP 105573 / AG-3a) protein is Bifunctional protein FolD 2.